We begin with the raw amino-acid sequence, 283 residues long: Large ribosomal subunit protein uL2 (283 aa).

2 disordered regions span residues 1-59 (MSIK…GGHK) and 222-283 (RGVA…TGGQ).

This sequence belongs to the universal ribosomal protein uL2 family. In terms of assembly, part of the 50S ribosomal subunit. Forms a bridge to the 30S subunit in the 70S ribosome.

In terms of biological role, one of the primary rRNA binding proteins. Required for association of the 30S and 50S subunits to form the 70S ribosome, for tRNA binding and peptide bond formation. It has been suggested to have peptidyltransferase activity; this is somewhat controversial. Makes several contacts with the 16S rRNA in the 70S ribosome. This Salinibacter ruber (strain DSM 13855 / M31) protein is Large ribosomal subunit protein uL2.